A 354-amino-acid polypeptide reads, in one-letter code: 3'-5' exonuclease (354 aa).

Positions 1–120 are disordered; it reads MEKYLIKMPI…PSPEKEKPEK (120 aa). The span at 36-50 shows a compositional bias: basic and acidic residues; sequence TKKDTPKELKDKENA. Positions 59–70 are enriched in basic residues; sequence TKGRPGRPAVKR. Residues 71–91 show a composition bias toward basic and acidic residues; it reads KNLDNPDAKAEKKATEEENPP. 3 positions are modified to phosphoserine: S104, S110, and S112. One can recognise a 3'-5' exonuclease domain in the interval 146–314; that stretch reads VLQWVEKQKD…GQVIYRELER (169 aa). D163, E165, and D301 together coordinate Mg(2+).

This sequence belongs to the WRNexo family.

Its subcellular location is the nucleus. Has exonuclease activity on both single-stranded and duplex templates bearing overhangs, but not blunt ended duplex DNA, and cleaves in a 3'-5' direction. Essential for the formation of DNA replication focal centers. Has an important role in maintaining genome stability. The protein is 3'-5' exonuclease of Drosophila yakuba (Fruit fly).